Here is a 405-residue protein sequence, read N- to C-terminus: Acetylornithine aminotransferase 1 (405 aa).

Pyridoxal 5'-phosphate contacts are provided by residues 108–109 (GA) and Phe-141. Position 144 (Arg-144) interacts with N(2)-acetyl-L-ornithine. 226–229 (DEVQ) is a binding site for pyridoxal 5'-phosphate. Lys-255 is subject to N6-(pyridoxal phosphate)lysine. Thr-283 is a binding site for N(2)-acetyl-L-ornithine. Thr-284 contacts pyridoxal 5'-phosphate.

This sequence belongs to the class-III pyridoxal-phosphate-dependent aminotransferase family. ArgD subfamily. As to quaternary structure, homodimer. Pyridoxal 5'-phosphate serves as cofactor.

The protein resides in the cytoplasm. The catalysed reaction is N(2)-acetyl-L-ornithine + 2-oxoglutarate = N-acetyl-L-glutamate 5-semialdehyde + L-glutamate. It functions in the pathway amino-acid biosynthesis; L-arginine biosynthesis; N(2)-acetyl-L-ornithine from L-glutamate: step 4/4. This Pseudomonas syringae pv. tomato (strain ATCC BAA-871 / DC3000) protein is Acetylornithine aminotransferase 1.